A 172-amino-acid polypeptide reads, in one-letter code: Adenine phosphoribosyltransferase (172 aa).

This sequence belongs to the purine/pyrimidine phosphoribosyltransferase family. Homodimer.

The protein localises to the cytoplasm. The catalysed reaction is AMP + diphosphate = 5-phospho-alpha-D-ribose 1-diphosphate + adenine. Its pathway is purine metabolism; AMP biosynthesis via salvage pathway; AMP from adenine: step 1/1. Functionally, catalyzes a salvage reaction resulting in the formation of AMP, that is energically less costly than de novo synthesis. In Hydrogenovibrio crunogenus (strain DSM 25203 / XCL-2) (Thiomicrospira crunogena), this protein is Adenine phosphoribosyltransferase.